We begin with the raw amino-acid sequence, 550 residues long: Transcription factor p65 (550 aa).

Met-1 bears the N-acetylmethionine mark. The region spanning 16–190 (ASGPYVEIIE…HPIFDNRAPN (175 aa)) is the RHD domain. Lys-37 participates in a covalent cross-link: Glycyl lysine isopeptide (Lys-Gly) (interchain with G-Cter in SUMO3). Cys-38 carries the cysteine persulfide; alternate modification. Cys-38 carries the post-translational modification S-nitrosocysteine; alternate. N6-acetyllysine is present on residues Lys-122, Lys-123, Lys-218, and Lys-221. Glycyl lysine isopeptide (Lys-Gly) (interchain with G-Cter in SUMO3); alternate cross-links involve residues Lys-122 and Lys-123. Thr-254 bears the Phosphothreonine mark. Residues Ser-276 and Ser-281 each carry the phosphoserine modification. The Nuclear localization signal motif lies at 301-304 (KRKR). Lys-310 carries the post-translational modification N6-acetyllysine; alternate. Lys-310 is modified (N6-methyllysine). Residue Ser-311 is modified to Phosphoserine. Transcriptional activation domain regions lie at residues 342-388 (PKPA…APVL) and 414-476 (PGPP…EFQQ). Thr-434 bears the Phosphothreonine mark. The residue at position 468 (Ser-468) is a Phosphoserine. Thr-505 is subject to Phosphothreonine. Residues 520 to 550 (TSGLPNGLSGDEDFSSIADMDFSALLSQISS) form a transcriptional activation domain 2 region. Ser-535 carries the post-translational modification Phosphoserine. Residues 535–543 (SIADMDFSA) carry the 9aaTAD motif.

Component of the NF-kappa-B p65-p50 complex. Component of the NF-kappa-B p65-c-Rel complex. Homodimer; component of the NF-kappa-B p65-p65 complex. Component of the NF-kappa-B p65-p52 complex. May interact with ETHE1. Binds TLE5 and TLE1. Interacts with TP53BP2. Binds to and is phosphorylated by the activated form of either RPS6KA4 or RPS6KA5. Interacts with ING4 and this interaction may be indirect. Interacts with CARM1, USP48 and UNC5CL. Interacts with IRAK1BP1. Interacts with NFKBID. Interacts with NFKBIA. Interacts with GSK3B. Interacts with NFKBIB. Interacts with NFKBIE. Interacts with NFKBIZ. Interacts with EHMT1 (via ANK repeats). Part of a 70-90 kDa complex at least consisting of CHUK, IKBKB, NFKBIA, RELA, ELP1 and MAP3K14. Interacts with HDAC3; HDAC3 mediates the deacetylation of RELA. Interacts with HDAC1; the interaction requires non-phosphorylated RELA. Interacts with CBP; the interaction requires phosphorylated RELA. Interacts (phosphorylated at 'Thr-254') with PIN1; the interaction inhibits p65 binding to NFKBIA. Interacts with SOCS1. Interacts with UXT. Interacts with MTDH and PHF11. Interacts with ARRB2. Interacts with NFKBIA (when phosphorylated), the interaction is direct; phosphorylated NFKBIA is part of a SCF(BTRC)-like complex lacking CUL1. Interacts with RNF25. Interacts (via C-terminus) with DDX1. Interacts with UFL1 and COMMD1. Interacts with BRMS1; this promotes deacetylation of 'Lys-310'. Interacts with NOTCH2. Directly interacts with MEN1; this interaction represses NFKB-mediated transactivation. Interacts with AKIP1, which promotes the phosphorylation and nuclear retention of RELA. Interacts (via the RHD) with GFI1; the interaction, after bacterial lipopolysaccharide (LPS) stimulation, inhibits the transcriptional activity by interfering with the DNA-binding activity to target gene promoter DNA. Interacts (when acetylated at Lys-310) with BRD4; leading to activation of the NF-kappa-B pathway. Interacts with MEFV. Interacts with CLOCK. Interacts (via N-terminus) with CPEN1; this interaction induces proteolytic cleavage of p65/RELA subunit and inhibition of NF-kappa-B transcriptional activity. Interacts with FOXP3. Interacts with CDK5RAP3; stimulates the interaction of RELA with HDAC1, HDAC2 and HDAC3 thereby inhibiting NF-kappa-B transcriptional activity. Interacts with DHX9; this interaction is direct and activates NF-kappa-B-mediated transcription. Interacts with LRRC25. Interacts with TBX21. Interacts with KAT2A. Interacts with ZBTB7A; involved in the control by RELA of the accessibility of target gene promoters. Directly interacts with DDX3X; this interaction may trap RELA in the cytoplasm, impairing nuclear relocalization upon TNF activating signals. Interacts with PHF2. Interacts with MKRN2; the interaction leads to its polyubiquitination and proteasome-dependent degradation. Interacts with ECSIT. Interacts with RAB28; the interaction contributes to RELA transport from cytoplasm to nucleus. Ubiquitinated by RNF182, leading to its proteasomal degradation. Degradation is required for termination of NF-kappa-B response. Polyubiquitinated via 'Lys-29'-linked ubiquitin; leading to lysosomal degradation. In terms of processing, monomethylated at Lys-310 by SETD6. Monomethylation at Lys-310 is recognized by the ANK repeats of EHMT1 and promotes the formation of repressed chromatin at target genes, leading to down-regulation of NF-kappa-B transcription factor activity. Phosphorylation at Ser-311 disrupts the interaction with EHMT1 without preventing monomethylation at Lys-310 and relieves the repression of target genes. Post-translationally, phosphorylation at Ser-311 disrupts the interaction with EHMT1 and promotes transcription factor activity. Phosphorylation on Ser-535 stimulates acetylation on Lys-310 and interaction with CBP; the phosphorylated and acetylated forms show enhanced transcriptional activity. Phosphorylation at Ser-276 by RPS6KA4 and RPS6KA5 promotes its transactivation and transcriptional activities. Phosphorylation at Ser-75 by herpes simplex virus 1/HHV-1 inhibits NF-kappa-B activation. In terms of processing, reversibly acetylated; the acetylation seems to be mediated by CBP, the deacetylation by HDAC3 and SIRT2. Acetylation at Lys-122 enhances DNA binding and impairs association with NFKBIA. Acetylation at Lys-310 is required for full transcriptional activity in the absence of effects on DNA binding and NFKBIA association. Acetylation at Lys-310 promotes interaction with BRD4. Acetylation can also lower DNA-binding and results in nuclear export. Interaction with BRMS1 promotes deacetylation of Lys-310. Lys-310 is deacetylated by SIRT2. Post-translationally, S-nitrosylation of Cys-38 inactivates the enzyme activity. Sulfhydration at Cys-38 mediates the anti-apoptotic activity by promoting the interaction with RPS3 and activating the transcription factor activity. In terms of processing, sumoylation by PIAS3 negatively regulates DNA-bound activated NF-kappa-B. Post-translationally, proteolytically cleaved within a conserved N-terminus region required for base-specific contact with DNA in a CPEN1-mediated manner, and hence inhibits NF-kappa-B transcriptional activity.

It is found in the nucleus. The protein resides in the cytoplasm. In terms of biological role, NF-kappa-B is a pleiotropic transcription factor present in almost all cell types and is the endpoint of a series of signal transduction events that are initiated by a vast array of stimuli related to many biological processes such as inflammation, immunity, differentiation, cell growth, tumorigenesis and apoptosis. NF-kappa-B is a homo- or heterodimeric complex formed by the Rel-like domain-containing proteins RELA/p65, RELB, NFKB1/p105, NFKB1/p50, REL and NFKB2/p52. The heterodimeric RELA-NFKB1 complex appears to be most abundant one. The dimers bind at kappa-B sites in the DNA of their target genes and the individual dimers have distinct preferences for different kappa-B sites that they can bind with distinguishable affinity and specificity. Different dimer combinations act as transcriptional activators or repressors, respectively. The NF-kappa-B heterodimeric RELA-NFKB1 and RELA-REL complexes, for instance, function as transcriptional activators. NF-kappa-B is controlled by various mechanisms of post-translational modification and subcellular compartmentalization as well as by interactions with other cofactors or corepressors. NF-kappa-B complexes are held in the cytoplasm in an inactive state complexed with members of the NF-kappa-B inhibitor (I-kappa-B) family. In a conventional activation pathway, I-kappa-B is phosphorylated by I-kappa-B kinases (IKKs) in response to different activators, subsequently degraded thus liberating the active NF-kappa-B complex which translocates to the nucleus. The inhibitory effect of I-kappa-B on NF-kappa-B through retention in the cytoplasm is exerted primarily through the interaction with RELA. RELA shows a weak DNA-binding site which could contribute directly to DNA binding in the NF-kappa-B complex. Besides its activity as a direct transcriptional activator, it is also able to modulate promoters accessibility to transcription factors and thereby indirectly regulate gene expression. Associates with chromatin at the NF-kappa-B promoter region via association with DDX1. Essential for cytokine gene expression in T-cells. The NF-kappa-B homodimeric RELA-RELA complex appears to be involved in invasin-mediated activation of IL-8 expression. Key transcription factor regulating the IFN response during SARS-CoV-2 infection. In Rattus norvegicus (Rat), this protein is Transcription factor p65.